The following is a 547-amino-acid chain: Chaperonin GroEL (547 aa).

Residues 30–33, K51, 87–91, G415, 479–481, and D495 contribute to the ATP site; these read TLGP, DGTTT, and NAA.

Belongs to the chaperonin (HSP60) family. In terms of assembly, forms a cylinder of 14 subunits composed of two heptameric rings stacked back-to-back. Interacts with the co-chaperonin GroES.

The protein resides in the cytoplasm. The enzyme catalyses ATP + H2O + a folded polypeptide = ADP + phosphate + an unfolded polypeptide.. Functionally, together with its co-chaperonin GroES, plays an essential role in assisting protein folding. The GroEL-GroES system forms a nano-cage that allows encapsulation of the non-native substrate proteins and provides a physical environment optimized to promote and accelerate protein folding. This Bordetella pertussis (strain Tohama I / ATCC BAA-589 / NCTC 13251) protein is Chaperonin GroEL.